Here is a 289-residue protein sequence, read N- to C-terminus: Shikimate kinase (289 aa).

84 to 94 contacts ATP; it reads PMASGLSSSSA.

This sequence belongs to the GHMP kinase family. Archaeal shikimate kinase subfamily.

Its subcellular location is the cytoplasm. It carries out the reaction shikimate + ATP = 3-phosphoshikimate + ADP + H(+). It functions in the pathway metabolic intermediate biosynthesis; chorismate biosynthesis; chorismate from D-erythrose 4-phosphate and phosphoenolpyruvate: step 5/7. The protein is Shikimate kinase of Methanobrevibacter smithii (strain ATCC 35061 / DSM 861 / OCM 144 / PS).